The sequence spans 457 residues: Metacaspase-1 (457 aa).

Positions 1 to 149 (MSWNQYPGGG…PQLQGQGGQS (149 aa)) are disordered. Gly residues predominate over residues 7–18 (PGGGHHQQGGYG). The span at 20-56 (RPPPPQWAQQGPPPPPNMGYRPPPPPQAYYNNPPPPQ) shows a compositional bias: pro residues. Positions 57 to 83 (QYQRPAPQQNGYQQGGYQQQQQSQGNY) are enriched in low complexity. Catalysis depends on residues His247 and Cys303.

The protein belongs to the peptidase C14B family.

Involved in cell death (apoptosis). This Cryptococcus neoformans var. neoformans serotype D (strain JEC21 / ATCC MYA-565) (Filobasidiella neoformans) protein is Metacaspase-1 (MCA1).